The primary structure comprises 129 residues: Histone H2A.J (129 aa).

The disordered stretch occupies residues Met-1 to Ala-22. 2 positions are modified to N6-acetyllysine: Lys-6 and Lys-10. Residues Gln-7–Ser-19 are compositionally biased toward basic residues. Lys-10 carries the post-translational modification N6-lactoyllysine; alternate. The residue at position 105 (Gln-105) is an N5-methylglutamine. Position 121 is a phosphothreonine; by DCAF1 (Thr-121).

Belongs to the histone H2A family. In terms of assembly, the nucleosome is a histone octamer containing two molecules each of H2A, H2B, H3 and H4 assembled in one H3-H4 heterotetramer and two H2A-H2B heterodimers. The octamer wraps approximately 147 bp of DNA. In terms of processing, glutamine methylation at Gln-105 (H2AQ104me) by FBL is specifically dedicated to polymerase I. It is present at 35S ribosomal DNA locus and impairs binding of the FACT complex. Post-translationally, monoubiquitination of Lys-120 (H2AXK119ub) gives a specific tag for epigenetic transcriptional repression. Following DNA double-strand breaks (DSBs), it is ubiquitinated through 'Lys-63' linkage of ubiquitin moieties. Phosphorylation on Ser-2 (H2AS1ph) is enhanced during mitosis. Phosphorylation on Ser-2 by RPS6KA5/MSK1 directly represses transcription. Acetylation of H3 inhibits Ser-2 phosphorylation by RPS6KA5/MSK1. Phosphorylation at Thr-121 (H2AT120ph) by DCAF1 is present in the regulatory region of many tumor suppresor genes and down-regulates their transcription.

Its subcellular location is the nucleus. The protein localises to the chromosome. In terms of biological role, core component of nucleosome. Nucleosomes wrap and compact DNA into chromatin, limiting DNA accessibility to the cellular machineries which require DNA as a template. Histones thereby play a central role in transcription regulation, DNA repair, DNA replication and chromosomal stability. DNA accessibility is regulated via a complex set of post-translational modifications of histones, also called histone code, and nucleosome remodeling. The protein is Histone H2A.J of Bos taurus (Bovine).